The following is a 302-amino-acid chain: AP-1 complex-associated regulatory protein (302 aa).

Serine 29 carries the post-translational modification Phosphoserine. The segment at 78–138 is interaction with AP1G1; the sequence is DSIAEKQKDL…ERQRIVQQYH (61 aa). Residues 80 to 138 are a coiled coil; sequence IAEKQKDLDKKIQKELALQEEKLRLEEEALYAAQREAARAAKQRKLLEQERQRIVQQYH. Polar residues predominate over residues 188–206; the sequence is CDLMTKTKSTSGNDDSTSL. Residues 188–258 are disordered; that stretch reads CDLMTKTKST…TSASDDSNGL (71 aa). Positions 199-215 are sufficient for association with the Arp2/3 complex; sequence GNDDSTSLDLEWEDEEG. Over residues 221 to 233 the composition is skewed to basic and acidic residues; the sequence is PMRERSKTEEDIL. Serine 226 bears the Phosphoserine mark. Threonine 228 bears the Phosphothreonine mark. Over residues 242–255 the composition is skewed to polar residues; the sequence is KKTGSNPTSASDDS.

In terms of assembly, interacts (via coiled-coil domain) with AP1G1 (via GAE domain). Interacts with KIF5B. Associates with the Arp2/3 complex. In terms of processing, palmitoylated.

It localises to the golgi apparatus. The protein resides in the trans-Golgi network. Its subcellular location is the late endosome. It is found in the early endosome. Its function is as follows. Necessary for adaptor protein complex 1 (AP-1)-dependent transport between the trans-Golgi network and endosomes. Regulates the membrane association of AP1G1/gamma1-adaptin, one of the subunits of the AP-1 adaptor complex. The direct interaction with AP1G1/gamma1-adaptin attenuates the release of the AP-1 complex from membranes. Regulates endosomal membrane traffic via association with AP-1 and KIF5B thus linking kinesin-based plus-end-directed microtubular transport to AP-1-dependent membrane traffic. May act as effector of AP-1 in calcium-induced endo-lysosome secretion. Inhibits Arp2/3 complex function; negatively regulates cell spreading, size and motility via intracellular sequestration of the Arp2/3 complex. The chain is AP-1 complex-associated regulatory protein (AP1AR) from Homo sapiens (Human).